A 322-amino-acid chain; its full sequence is Light-dependent protochlorophyllide reductase (322 aa).

Belongs to the short-chain dehydrogenases/reductases (SDR) family. POR subfamily.

The catalysed reaction is chlorophyllide a + NADP(+) = protochlorophyllide a + NADPH + H(+). Its pathway is porphyrin-containing compound metabolism; chlorophyll biosynthesis. Functionally, phototransformation of protochlorophyllide (Pchlide) to chlorophyllide (Chlide). This chain is Light-dependent protochlorophyllide reductase (por), found in Synechocystis sp. (strain ATCC 27184 / PCC 6803 / Kazusa).